Here is a 72-residue protein sequence, read N- to C-terminus: Inner membrane protein YmgF (72 aa).

The Cytoplasmic segment spans residues 1–9 (MNNSNNLDY). Residues 10–30 (FTLYIIFSIAFMLITLLVILI) form a helical membrane-spanning segment. The Periplasmic portion of the chain corresponds to 31–34 (AKPS). Residues 35–55 (TGLGEVLVTINLLNALVWLAI) form a helical membrane-spanning segment. Over 56-72 (NLVNRLRERLVNHRDQQ) the chain is Cytoplasmic.

As to quaternary structure, interacts with FtsL, FtsQ, FtsI, FtsN, and probably many other cell division proteins.

It is found in the cell inner membrane. In terms of biological role, could be involved in cell division. May participate in the stabilization of the cell divisome under specific conditions. This Escherichia coli (strain K12) protein is Inner membrane protein YmgF (ymgF).